We begin with the raw amino-acid sequence, 246 residues long: mRNA-decapping protein g5R (246 aa).

Residues 91 to 239 enclose the Nudix hydrolase domain; that stretch reads KYQKFKKNWL…IIGPAFNFIK (149 aa). The Nudix box signature appears at 128–149; that stretch reads GKPKENESDLACAIREFEEETG. Glu-134 lines the Mg(2+) pocket. The active-site Nucleophile is Glu-143. Residues Glu-147 and Glu-169 each contribute to the Mg(2+) site.

This sequence belongs to the Nudix hydrolase family. DIPP subfamily. As to quaternary structure, interacts with host RPL23A. Mg(2+) is required as a cofactor. Mn(2+) serves as cofactor.

It is found in the host rough endoplasmic reticulum. The catalysed reaction is diphospho-myo-inositol polyphosphate + H2O = myo-inositol polyphosphate + phosphate.. In terms of biological role, decapping enzyme required for the removal of the 5'-end m7GpppN cap tethered to viral and host mRNAs to allow their decay in cells. May therefore accelerate viral and cellular mRNA turnover to eliminate competing host mRNAs and allow stage-specific synthesis of viral proteins. Acceleration of the turnover of cellular transcripts may even promote the shutoff of host protein synthesis. In addition to the mRNA cap, g5R also efficiently hydrolyzes diphosphoinositol polyphosphates. Down-regulation of the level of PP-InsP5 (diphosphoinositol pentakisphosphate) may play a role in viral manipulation of the cellular secretory pathway, a step necessary for the formation of virions. Binds viral and cellular poly(A) mRNAs, thereby decreasing both types of mRNAs. The chain is mRNA-decapping protein g5R from African swine fever virus (isolate Pig/Kenya/KEN-50/1950) (ASFV).